The following is a 113-amino-acid chain: U11-theraphotoxin-Hhn1a (113 aa).

The signal sequence occupies residues 1 to 21; that stretch reads MNTVRVTFLLVFVLAVSLGQA. Positions 22–74 are excised as a propeptide; sequence DKDENRMEMQEKTEQGRSYLDFAENLLLQKLEELEAKLLEEDSEESRNSRQKR. A disordered region spans residues 61–83; it reads EEDSEESRNSRQKRCIGEGVPCD. Intrachain disulfides connect Cys-75–Cys-90, Cys-82–Cys-95, and Cys-89–Cys-110.

It belongs to the neurotoxin 14 (magi-1) family. 01 (HNTX-16) subfamily. In terms of tissue distribution, expressed by the venom gland.

It localises to the secreted. Probable ion channel inhibitor. This is U11-theraphotoxin-Hhn1a from Cyriopagopus hainanus (Chinese bird spider).